The sequence spans 247 residues: 1-(5-phosphoribosyl)-5-[(5-phosphoribosylamino)methylideneamino] imidazole-4-carboxamide isomerase (247 aa).

Residue D8 is the Proton acceptor of the active site. D131 acts as the Proton donor in catalysis.

Belongs to the HisA/HisF family.

It localises to the cytoplasm. The enzyme catalyses 1-(5-phospho-beta-D-ribosyl)-5-[(5-phospho-beta-D-ribosylamino)methylideneamino]imidazole-4-carboxamide = 5-[(5-phospho-1-deoxy-D-ribulos-1-ylimino)methylamino]-1-(5-phospho-beta-D-ribosyl)imidazole-4-carboxamide. The protein operates within amino-acid biosynthesis; L-histidine biosynthesis; L-histidine from 5-phospho-alpha-D-ribose 1-diphosphate: step 4/9. The protein is 1-(5-phosphoribosyl)-5-[(5-phosphoribosylamino)methylideneamino] imidazole-4-carboxamide isomerase of Methylobacillus flagellatus (strain ATCC 51484 / DSM 6875 / VKM B-1610 / KT).